A 93-amino-acid chain; its full sequence is MTDTPDVQPPKIEFPCERYPIKVIGDAGEGFSDLVVEIIQRHAPDLDVETLVVRDSSKGRFLSVQVLITATDVDQLQAIHNDLRATGRVHMVL.

Belongs to the UPF0250 family.

The protein is UPF0250 protein PA3998 of Pseudomonas aeruginosa (strain ATCC 15692 / DSM 22644 / CIP 104116 / JCM 14847 / LMG 12228 / 1C / PRS 101 / PAO1).